Here is a 302-residue protein sequence, read N- to C-terminus: Phosphoribosylaminoimidazole-succinocarboxamide synthase (302 aa).

Belongs to the SAICAR synthetase family.

It carries out the reaction 5-amino-1-(5-phospho-D-ribosyl)imidazole-4-carboxylate + L-aspartate + ATP = (2S)-2-[5-amino-1-(5-phospho-beta-D-ribosyl)imidazole-4-carboxamido]succinate + ADP + phosphate + 2 H(+). The protein operates within purine metabolism; IMP biosynthesis via de novo pathway; 5-amino-1-(5-phospho-D-ribosyl)imidazole-4-carboxamide from 5-amino-1-(5-phospho-D-ribosyl)imidazole-4-carboxylate: step 1/2. The polypeptide is Phosphoribosylaminoimidazole-succinocarboxamide synthase (Cupriavidus metallidurans (strain ATCC 43123 / DSM 2839 / NBRC 102507 / CH34) (Ralstonia metallidurans)).